Consider the following 181-residue polypeptide: Large ribosomal subunit protein uL5 (181 aa).

Belongs to the universal ribosomal protein uL5 family. Part of the 50S ribosomal subunit; part of the 5S rRNA/L5/L18/L25 subcomplex. Contacts the 5S rRNA and the P site tRNA. Forms a bridge to the 30S subunit in the 70S ribosome.

Its function is as follows. This is one of the proteins that bind and probably mediate the attachment of the 5S RNA into the large ribosomal subunit, where it forms part of the central protuberance. In the 70S ribosome it contacts protein S13 of the 30S subunit (bridge B1b), connecting the 2 subunits; this bridge is implicated in subunit movement. Contacts the P site tRNA; the 5S rRNA and some of its associated proteins might help stabilize positioning of ribosome-bound tRNAs. The protein is Large ribosomal subunit protein uL5 of Helicobacter hepaticus (strain ATCC 51449 / 3B1).